The following is a 390-amino-acid chain: LL-diaminopimelate aminotransferase (390 aa).

The substrate site is built by Tyr13, Gly38, Lys102, Tyr126, and Asn176. Pyridoxal 5'-phosphate-binding positions include 101–102, Tyr126, Asn176, Tyr207, and 235–237; these read SK and SVS. Lys238 is modified (N6-(pyridoxal phosphate)lysine). Arg246 contributes to the pyridoxal 5'-phosphate binding site. Residue Arg364 participates in substrate binding.

This sequence belongs to the class-I pyridoxal-phosphate-dependent aminotransferase family. LL-diaminopimelate aminotransferase subfamily. As to quaternary structure, homodimer. Pyridoxal 5'-phosphate is required as a cofactor.

The catalysed reaction is (2S,6S)-2,6-diaminopimelate + 2-oxoglutarate = (S)-2,3,4,5-tetrahydrodipicolinate + L-glutamate + H2O + H(+). It participates in amino-acid biosynthesis; L-lysine biosynthesis via DAP pathway; LL-2,6-diaminopimelate from (S)-tetrahydrodipicolinate (aminotransferase route): step 1/1. In terms of biological role, involved in the synthesis of meso-diaminopimelate (m-DAP or DL-DAP), required for both lysine and peptidoglycan biosynthesis. Catalyzes the direct conversion of tetrahydrodipicolinate to LL-diaminopimelate. Is also able to catalyze the reverse reaction in vitro, i.e. the transamination of LL-diaminopimelate with 2-oxoglutarate to produce tetrahydrodipicolinate and glutamate. Can also use m-DAP instead of LL-DAP as the amino-group donor, and oxaloacetate instead of 2-oxoglutarate as the amino-group acceptor. This is LL-diaminopimelate aminotransferase from Moorella thermoacetica (strain ATCC 39073 / JCM 9320).